The primary structure comprises 350 residues: Bifunctional methylenetetrahydrofolate dehydrogenase/cyclohydrolase, mitochondrial (350 aa).

The N-terminal 35 residues, 1-35 (MAATSLMSALAARLLQPAHSCSLRLRPFHLAAVRN), are a transit peptide targeting the mitochondrion. Residue Lys-50 is modified to N6-acetyllysine; alternate. Residue Lys-50 forms a Glycyl lysine isopeptide (Lys-Gly) (interchain with G-Cter in SUMO2); alternate linkage. Residues 84 to 88 (YVLNK) and 131 to 133 (VQL) contribute to the substrate site. NAD(+)-binding positions include 200–202 (GRS) and Arg-233. Substrate is bound at residue 309 to 313 (PGGVG).

This sequence belongs to the tetrahydrofolate dehydrogenase/cyclohydrolase family. As to quaternary structure, homodimer. It depends on Mg(2+) as a cofactor.

It localises to the mitochondrion. It catalyses the reaction (6R)-5,10-methylene-5,6,7,8-tetrahydrofolate + NAD(+) = (6R)-5,10-methenyltetrahydrofolate + NADH. The catalysed reaction is (6R)-5,10-methenyltetrahydrofolate + H2O = (6R)-10-formyltetrahydrofolate + H(+). Its function is as follows. Although its dehydrogenase activity is NAD-specific, it can also utilize NADP at a reduced efficiency. The sequence is that of Bifunctional methylenetetrahydrofolate dehydrogenase/cyclohydrolase, mitochondrial (MTHFD2) from Homo sapiens (Human).